Consider the following 1114-residue polypeptide: Proto-oncogene tyrosine-protein kinase receptor Ret (1114 aa).

The N-terminal stretch at 1 to 28 is a signal peptide; the sequence is MAKATSGAAGLRLLLLLLLPLLGKVALG. Residues 29–153 are cadherin-like region 1 (CLD1); that stretch reads LYFSRDAYWE…RVYFSFFNTS (125 aa). Topologically, residues 29–635 are extracellular; the sequence is LYFSRDAYWE…QDPLCDELCR (607 aa). N-linked (GlcNAc...) asparagine glycosylation is present at N98. A disulfide bridge links C137 with C142. N-linked (GlcNAc...) asparagine glycosylation is present at N151. 2 disulfides stabilise this stretch: C157-C197 and C166-C243. In terms of domain architecture, Cadherin spans 168-272; that stretch reads PETRPSFRIR…YDEDDSAPTF (105 aa). 2 residues coordinate Ca(2+): E178 and N179. N-linked (GlcNAc...) asparagine glycosylation occurs at N199. Ca(2+)-binding residues include D230, E232, D264, E265, D266, D267, S268, D300, and D302. Residues 265–379 form a cadherin-like region 3 (CLD3) region; the sequence is EDDSAPTFPA…MQLAVLVNDS (115 aa). N-linked (GlcNAc...) asparagine glycosylation is found at N336, N343, N361, N367, and N377. D378 contributes to the Ca(2+) binding site. An N-linked (GlcNAc...) asparagine glycan is attached at N394. Residues 405–506 form a cadherin-like region 4 (CLD4) region; the sequence is PSTYSLSVSR…QAQLLVTVEG (102 aa). C426 and C430 are joined by a disulfide. 2 N-linked (GlcNAc...) asparagine glycosylation sites follow: N448 and N468. Cystine bridges form between C449-C478, C515-C531, C519-C541, and C528-C558. N554 carries N-linked (GlcNAc...) asparagine glycosylation. T564, C565, D567, H569, E574, and D584 together coordinate Ca(2+). Cystine bridges form between C565–C581, C570–C585, C609–C620, C611–C618, and C630–C634. A helical transmembrane segment spans residues 636-657; it reads TVIAAAVLFSFIVSVLLSAFCI. Residues 658-1114 lie on the Cytoplasmic side of the membrane; it reads HCYHKFAHKP…AAKLMDTFDS (457 aa). Residue Y687 is modified to Phosphotyrosine; by autocatalysis. An O-linked (GlcNAc) serine glycan is attached at S688. Residue S696 is modified to Phosphoserine. The region spanning 724–1016 is the Protein kinase domain; that stretch reads LVLGKTLGEG…KMMVKRRDYL (293 aa). ATP-binding positions include 730–738 and K758; that span reads LGEGEFGKV. A semaxanib-binding site is contributed by 805–807; it reads EYA. Residues Y806, Y809, and Y826 each carry the phosphotyrosine; by autocatalysis modification. D874 (proton acceptor) is an active-site residue. Residues Y900, Y905, Y981, Y1015, Y1029, Y1062, Y1090, and Y1096 each carry the phosphotyrosine; by autocatalysis modification.

The protein belongs to the protein kinase superfamily. Tyr protein kinase family. As to quaternary structure, phosphorylated form interacts with the PBT domain of DOK2, DOK4 and DOK5. The phosphorylated form interacts with PLCG1 and GRB7. Interacts (not phosphorylated) with PTK2/FAK1 (via FERM domain). Extracellular cell-membrane anchored RET cadherin fragments form complex in neurons with reduced trophic status, preferentially at the contact sites between somas. Interacts with AIP in the pituitary gland; this interaction prevents the formation of the AIP-survivin complex. Interacts (inactive) with CBLC and CD2AP; dissociates upon activation by GDNF which increases CBLC:CD2AP interaction. Requires Ca(2+) as cofactor. Autophosphorylated on C-terminal tyrosine residues upon ligand stimulation. Post-translationally, proteolytically cleaved by caspase-3. The soluble RET kinase fragment is able to induce cell death. The extracellular cell-membrane anchored RET cadherin fragment accelerates cell adhesion in sympathetic neurons.

The protein resides in the cell membrane. It localises to the endosome membrane. The catalysed reaction is L-tyrosyl-[protein] + ATP = O-phospho-L-tyrosyl-[protein] + ADP + H(+). Repressed by 4-(3-hydroxyanilino)-quinolines derivatives, indolin-2-one-derivatives, 2-(alkylsulfanyl)-4-(3-thienyl) nicotinonitrile analogs, 3- and 4-substituted beta-carbolin-1-ones, vandetanib, motesanib, sorafenib (BAY 43-9006), cabozantinib (XL184), lenvatinib, sunitinib, nintedanib, and withaferin A (WA). Inactivation by sorafenib both reduces kinase activity and promotes lysosomal degradation. Receptor tyrosine-protein kinase involved in numerous cellular mechanisms including cell proliferation, neuronal navigation, cell migration, and cell differentiation in response to glia cell line-derived growth family factors (GDNF, NRTN, ARTN, PSPN and GDF15). In contrast to most receptor tyrosine kinases, RET requires not only its cognate ligands but also coreceptors, for activation. GDNF ligands (GDNF, NRTN, ARTN, PSPN and GDF15) first bind their corresponding GDNFR coreceptors (GFRA1, GFRA2, GFRA3, GFRA4 and GFRAL, respectively), triggering RET autophosphorylation and activation, leading to activation of downstream signaling pathways, including the MAPK- and AKT-signaling pathways. Acts as a dependence receptor via the GDNF-GFRA1 signaling: in the presence of the ligand GDNF in somatotrophs within pituitary, promotes survival and down regulates growth hormone (GH) production, but triggers apoptosis in absence of GDNF. Required for the molecular mechanisms orchestration during intestine organogenesis via the ARTN-GFRA3 signaling: involved in the development of enteric nervous system and renal organogenesis during embryonic life, and promotes the formation of Peyer's patch-like structures, a major component of the gut-associated lymphoid tissue. Mediates, through interaction with GDF15-receptor GFRAL, GDF15-induced cell-signaling in the brainstem which triggers an aversive response, characterized by nausea, vomiting, and/or loss of appetite in response to various stresses. Modulates cell adhesion via its cleavage by caspase in sympathetic neurons and mediates cell migration in an integrin (e.g. ITGB1 and ITGB3)-dependent manner. Also active in the absence of ligand, triggering apoptosis through a mechanism that requires receptor intracellular caspase cleavage. Triggers the differentiation of rapidly adapting (RA) mechanoreceptors. Involved in the development of the neural crest. Regulates nociceptor survival and size. Phosphorylates PTK2/FAK1. Functionally, isoform 1 in complex with GFRAL induces higher activation of MAPK-signaling pathway than isoform 2 in complex with GFRAL. The sequence is that of Proto-oncogene tyrosine-protein kinase receptor Ret from Homo sapiens (Human).